The primary structure comprises 601 residues: Putative helicase 7 (601 aa).

The 166-residue stretch at 17 to 182 (QSFLMSDKNL…IIDAEIIKTD (166 aa)) folds into the Helicase ATP-binding domain. Residue 30–37 (APTGTGKS) coordinates ATP. Residues 129 to 132 (DEIH) carry the DEAH box motif. The region spanning 208–375 (LKEDFIKKMV…VLEDFLLALI (168 aa)) is the Helicase C-terminal domain.

The sequence is that of Putative helicase 7 (SIFV0007) from Saccharolobus islandicus (Sulfolobus islandicus).